A 75-amino-acid chain; its full sequence is Small ribosomal subunit protein bS21 (75 aa).

Positions 52-75 (RRARKLARKRAQREGLIGGRPGAR) are disordered. Residues 53-62 (RARKLARKRA) are compositionally biased toward basic residues.

This sequence belongs to the bacterial ribosomal protein bS21 family.

The sequence is that of Small ribosomal subunit protein bS21 from Brucella anthropi (strain ATCC 49188 / DSM 6882 / CCUG 24695 / JCM 21032 / LMG 3331 / NBRC 15819 / NCTC 12168 / Alc 37) (Ochrobactrum anthropi).